Reading from the N-terminus, the 191-residue chain is Thymidine kinase (191 aa).

Residues 9–16 (GTMNSGKT) and 85–88 (DEAQ) each bind ATP. Residue glutamate 86 is the Proton acceptor of the active site. Residues cysteine 143, cysteine 146, cysteine 180, and histidine 183 each coordinate Zn(2+).

The protein belongs to the thymidine kinase family. As to quaternary structure, homotetramer.

The protein localises to the cytoplasm. The catalysed reaction is thymidine + ATP = dTMP + ADP + H(+). This is Thymidine kinase from Streptococcus gordonii (strain Challis / ATCC 35105 / BCRC 15272 / CH1 / DL1 / V288).